The following is a 199-amino-acid chain: uncharacterized protein (199 aa).

The next 7 membrane-spanning stretches (helical) occupy residues 10-32, 37-59, 63-80, 83-100, 104-121, 126-148, and 163-185; these read LTSQ…FIGY, VYSA…INYY, LIVI…FALI, LGLI…GVYL, YQVY…INLF, LTVL…MGIT, and FDAI…TGII.

The protein localises to the cell membrane. This is an uncharacterized protein from Archaeoglobus fulgidus (strain ATCC 49558 / DSM 4304 / JCM 9628 / NBRC 100126 / VC-16).